The chain runs to 273 residues: uncharacterized protein (273 aa).

Positions 1–21 are cleaved as a signal peptide; that stretch reads MKILRWLFALVMLIATTEAMA.

The protein to S.typhimurium YadU.

In terms of biological role, part of the yfcOPQRSUV fimbrial operon. Could contribute to adhesion to various surfaces in specific environmental niches. Increases adhesion to eukaryotic T24 bladder epithelial cells in the absence of fim genes. This is an uncharacterized protein from Escherichia coli (strain K12).